We begin with the raw amino-acid sequence, 167 residues long: Photosystem I assembly protein Ycf3 (167 aa).

TPR repeat units lie at residues 35-68, 72-105, and 120-153; these read AFTY…EIDP, SYIL…NPSL, and GEQA…APGN.

The protein belongs to the Ycf3 family.

It is found in the plastid. Its subcellular location is the chloroplast thylakoid membrane. In terms of biological role, essential for the assembly of the photosystem I (PSI) complex. May act as a chaperone-like factor to guide the assembly of the PSI subunits. The sequence is that of Photosystem I assembly protein Ycf3 from Chara vulgaris (Common stonewort).